We begin with the raw amino-acid sequence, 754 residues long: 5-methyltetrahydropteroyltriglutamate--homocysteine methyltransferase (754 aa).

5-methyltetrahydropteroyltri-L-glutamate is bound by residues 15-18 (RELK) and K114. L-homocysteine-binding positions include 430-432 (IGS) and E483. Residues 430–432 (IGS) and E483 each bind L-methionine. 5-methyltetrahydropteroyltri-L-glutamate is bound by residues 514–515 (RC) and W560. Residue D598 participates in L-homocysteine binding. D598 is a binding site for L-methionine. E604 provides a ligand contact to 5-methyltetrahydropteroyltri-L-glutamate. The Zn(2+) site is built by H641, C643, and E665. The Proton donor role is filled by H694. A Zn(2+)-binding site is contributed by C726.

Belongs to the vitamin-B12 independent methionine synthase family. Requires Zn(2+) as cofactor.

The catalysed reaction is 5-methyltetrahydropteroyltri-L-glutamate + L-homocysteine = tetrahydropteroyltri-L-glutamate + L-methionine. The protein operates within amino-acid biosynthesis; L-methionine biosynthesis via de novo pathway; L-methionine from L-homocysteine (MetE route): step 1/1. Catalyzes the transfer of a methyl group from 5-methyltetrahydrofolate to homocysteine resulting in methionine formation. The sequence is that of 5-methyltetrahydropteroyltriglutamate--homocysteine methyltransferase from Campylobacter jejuni subsp. doylei (strain ATCC BAA-1458 / RM4099 / 269.97).